The sequence spans 420 residues: L-rhamnose isomerase (420 aa).

Positions 264, 296, and 298 each coordinate Mn(2+).

The protein belongs to the rhamnose isomerase family. It depends on Mn(2+) as a cofactor.

The protein localises to the cytoplasm. It carries out the reaction L-rhamnopyranose = L-rhamnulose. The protein operates within carbohydrate degradation; L-rhamnose degradation; glycerone phosphate from L-rhamnose: step 1/3. Catalyzes the interconversion of L-rhamnose and L-rhamnulose. The polypeptide is L-rhamnose isomerase (Listeria monocytogenes serotype 4b (strain CLIP80459)).